The primary structure comprises 235 residues: Sugar fermentation stimulation protein homolog (235 aa).

It belongs to the SfsA family.

This is Sugar fermentation stimulation protein homolog from Pseudomonas aeruginosa (strain ATCC 15692 / DSM 22644 / CIP 104116 / JCM 14847 / LMG 12228 / 1C / PRS 101 / PAO1).